We begin with the raw amino-acid sequence, 184 residues long: Ribosome-recycling factor (184 aa).

It belongs to the RRF family.

The protein localises to the cytoplasm. Responsible for the release of ribosomes from messenger RNA at the termination of protein biosynthesis. May increase the efficiency of translation by recycling ribosomes from one round of translation to another. The sequence is that of Ribosome-recycling factor from Lachnoclostridium phytofermentans (strain ATCC 700394 / DSM 18823 / ISDg) (Clostridium phytofermentans).